The following is a 187-amino-acid chain: Large ribosomal subunit protein uL5 (187 aa).

Belongs to the universal ribosomal protein uL5 family. Part of the 50S ribosomal subunit; part of the 5S rRNA/L5/L18/L25 subcomplex. Contacts the 5S rRNA and the P site tRNA. Forms a bridge to the 30S subunit in the 70S ribosome.

Its function is as follows. This is one of the proteins that bind and probably mediate the attachment of the 5S RNA into the large ribosomal subunit, where it forms part of the central protuberance. In the 70S ribosome it contacts protein S13 of the 30S subunit (bridge B1b), connecting the 2 subunits; this bridge is implicated in subunit movement. Contacts the P site tRNA; the 5S rRNA and some of its associated proteins might help stabilize positioning of ribosome-bound tRNAs. The sequence is that of Large ribosomal subunit protein uL5 from Ruegeria sp. (strain TM1040) (Silicibacter sp.).